The chain runs to 139 residues: Probable disulfide formation protein C (139 aa).

Residues 8–27 (EYALLTAWGASFIATLGSLY) traverse the membrane as a helical segment. Residues Cys37 and Cys40 are joined by a disulfide bond. 2 helical membrane-spanning segments follow: residues 42-61 (YQRIFMYPFVLWLGIAVAKK) and 68-85 (YSLPIASIGACISLYHYA). Cysteines 99 and 104 form a disulfide. A helical transmembrane segment spans residues 113-135 (GFVTIPFLALIGFITIAVCSFIV).

It belongs to the DsbB family. BdbC subfamily.

The protein localises to the cell membrane. Required for disulfide bond formation in some proteins. The sequence is that of Probable disulfide formation protein C from Bacillus cereus (strain ATCC 14579 / DSM 31 / CCUG 7414 / JCM 2152 / NBRC 15305 / NCIMB 9373 / NCTC 2599 / NRRL B-3711).